A 273-amino-acid chain; its full sequence is Large ribosomal subunit protein uL2 (273 aa).

The segment at 221–263 (RGTAMNPVDHPHGGGEGRNFGKHPVTPWGVQTKGKKTRHNKRT) is disordered. A compositionally biased stretch (basic residues) spans 253 to 263 (KGKKTRHNKRT).

Belongs to the universal ribosomal protein uL2 family. In terms of assembly, part of the 50S ribosomal subunit. Forms a bridge to the 30S subunit in the 70S ribosome.

Its function is as follows. One of the primary rRNA binding proteins. Required for association of the 30S and 50S subunits to form the 70S ribosome, for tRNA binding and peptide bond formation. It has been suggested to have peptidyltransferase activity; this is somewhat controversial. Makes several contacts with the 16S rRNA in the 70S ribosome. The chain is Large ribosomal subunit protein uL2 from Histophilus somni (strain 2336) (Haemophilus somnus).